The chain runs to 101 residues: MEKVTNDTIKHVAALAQLEFSEEELAKFTPQMGKILEMAEELQAVDTTGVEETVQVVDRDTVFREDVPEKWQTREEMMKNVPDKSNGFVKVPVIIDKDDNQ.

This sequence belongs to the GatC family. As to quaternary structure, heterotrimer of A, B and C subunits.

It catalyses the reaction L-glutamyl-tRNA(Gln) + L-glutamine + ATP + H2O = L-glutaminyl-tRNA(Gln) + L-glutamate + ADP + phosphate + H(+). It carries out the reaction L-aspartyl-tRNA(Asn) + L-glutamine + ATP + H2O = L-asparaginyl-tRNA(Asn) + L-glutamate + ADP + phosphate + 2 H(+). Allows the formation of correctly charged Asn-tRNA(Asn) or Gln-tRNA(Gln) through the transamidation of misacylated Asp-tRNA(Asn) or Glu-tRNA(Gln) in organisms which lack either or both of asparaginyl-tRNA or glutaminyl-tRNA synthetases. The reaction takes place in the presence of glutamine and ATP through an activated phospho-Asp-tRNA(Asn) or phospho-Glu-tRNA(Gln). The polypeptide is Aspartyl/glutamyl-tRNA(Asn/Gln) amidotransferase subunit C (Lactobacillus delbrueckii subsp. bulgaricus (strain ATCC 11842 / DSM 20081 / BCRC 10696 / JCM 1002 / NBRC 13953 / NCIMB 11778 / NCTC 12712 / WDCM 00102 / Lb 14)).